The chain runs to 1075 residues: Atos homolog protein A (1075 aa).

Residues 24-32 form a transactivation domain 1 (TAD1) region; that stretch reads ALLITEGRT. Disordered stretches follow at residues 430-469, 570-592, and 703-766; these read FGSPEFGSPGDSREGKVREKSETRPGETCTSHSLYPRQPA, YSPQEKPLKPEVRTQHQNHPDSI, and LNKN…PHSV. Basic and acidic residues predominate over residues 440 to 454; sequence DSREGKVREKSETRP. Residues 703 to 712 show a composition bias toward polar residues; that stretch reads LNKNKTNCSS. Positions 746–759 are enriched in basic and acidic residues; sequence DRLKTEQEAKRDSG. Residues 878 to 935 form a required for macropage invasion region; that stretch reads LLGNFEESVLNYRLDPLGIVDGFTAEVGASGTFCPTHLTLPVEVSFYSVSDDNAPSPY. The transactivation domain 2 (TAD2) stretch occupies residues 962 to 970; it reads FNPNKTVVK.

Belongs to the ATOS family.

The protein localises to the nucleus. Functionally, transcription regulator that syncronizes transcriptional and translational programs to promote macrophage invasion of tissues. This chain is Atos homolog protein A (Atosa), found in Mus musculus (Mouse).